We begin with the raw amino-acid sequence, 300 residues long: Ribosomal protein bS6--L-glutamate ligase (300 aa).

Residues 104–287 (LQLLARQGID…IAGRMIQWIE (184 aa)) enclose the ATP-grasp domain. ATP contacts are provided by residues Lys141, 178-179 (EY), Asp187, and 211-213 (RSN). 3 residues coordinate Mg(2+): Asp248, Glu260, and Asn262. Mn(2+)-binding residues include Asp248, Glu260, and Asn262.

This sequence belongs to the RimK family. The cofactor is Mg(2+). It depends on Mn(2+) as a cofactor.

An L-glutamate ligase that catalyzes the ATP-dependent post-translational addition of glutamate residues to the C-terminus of ribosomal protein bS6 (RpsF). Is also able to catalyze the synthesis of poly-alpha-glutamate in vitro, via ATP hydrolysis from unprotected glutamate as substrate. The number of glutamate residues added to either RpsF or to poly-alpha-glutamate changes with pH. The chain is Ribosomal protein bS6--L-glutamate ligase from Salmonella agona (strain SL483).